The chain runs to 877 residues: Telomere length regulation protein clk-2 (877 aa).

Polar residues predominate over residues 488-501 (NKDSAAITSKNNLR). The segment at 488–509 (NKDSAAITSKNNLRLDSDDDED) is disordered.

Belongs to the TEL2 family.

It is found in the nucleus. Its subcellular location is the chromosome. It localises to the telomere. DNA damage checkpoint protein required for DNA damage-induced cell cycle arrest and apoptosis, thereby playing a role in genome stability. Regulator of telomere length. The chain is Telomere length regulation protein clk-2 (clk-2) from Caenorhabditis elegans.